The chain runs to 427 residues: MSTSFENKATNRGVITFTISQDKIKPALDKAFNKIKKDLNAPGFRKGHMPRPVFNQKFGEEVLYEDALNIVLPEAYEAAVTELGLDVVAQPKIDVVSMEKGKEWTLSAEVVTKPEVKLGDYKNLVVEVDASKEVSDEDVDAKIERERQNLAELIIKDGEAAQGDTVVIDFVGSVDGVEFDGGKGDNFSLELGSGQFIPGFEDQLVGAKAGDEVEVNVTFPESYQAEDLAGKAAKFMTTIHEVKTKEVPELDDELAKDIDEDVDTLEDLKVKYRKELEAAQETAYDDAVEGAAIELAVANAEIVDLPEEMIHEEVNRSVNEFMGNMQRQGISPEMYFQLTGTTQEDLHNQYSAEADKRVKTNLVIEAIAKAEGFEATDSEIEQEINDLATEYNMPADQVRSLLSADMLKHDIAMKKAVEVITSTASVK.

The 86-residue stretch at 163–248 folds into the PPIase FKBP-type domain; it reads GDTVVIDFVG…IHEVKTKEVP (86 aa).

This sequence belongs to the FKBP-type PPIase family. Tig subfamily.

It is found in the cytoplasm. It catalyses the reaction [protein]-peptidylproline (omega=180) = [protein]-peptidylproline (omega=0). Its function is as follows. Involved in protein export. Acts as a chaperone by maintaining the newly synthesized protein in an open conformation. Functions as a peptidyl-prolyl cis-trans isomerase. This Streptococcus pyogenes serotype M1 protein is Trigger factor (tig).